Reading from the N-terminus, the 68-residue chain is Large ribosomal subunit protein uL29 (68 aa).

The protein belongs to the universal ribosomal protein uL29 family.

The chain is Large ribosomal subunit protein uL29 from Streptococcus pneumoniae (strain JJA).